Reading from the N-terminus, the 251-residue chain is Probable transcriptional regulatory protein CC_3243 (251 aa).

It belongs to the TACO1 family.

It localises to the cytoplasm. This is Probable transcriptional regulatory protein CC_3243 from Caulobacter vibrioides (strain ATCC 19089 / CIP 103742 / CB 15) (Caulobacter crescentus).